The chain runs to 263 residues: Ret finger protein-like 4B (263 aa).

An RING-type zinc finger spans residues 11-53 (CPVCLDFFSCSISLSCTHVFCFDCIQRYILENHDFRAMCPLCR). The region spanning 76 to 263 (HNSRLEQSLH…ESGNVLTICP (188 aa)) is the B30.2/SPRY domain.

The sequence is that of Ret finger protein-like 4B (RFPL4B) from Homo sapiens (Human).